Reading from the N-terminus, the 731-residue chain is Beta-galactosidase (731 aa).

An N-terminal signal peptide occupies residues 1–23 (MGVGIQTMWSILLLFSCIFSAAS). Glu-182 (proton donor) is an active-site residue. Glu-251 serves as the catalytic Nucleophile. Asn-459 is a glycosylation site (N-linked (GlcNAc...) asparagine).

The protein belongs to the glycosyl hydrolase 35 family.

It localises to the secreted. It is found in the extracellular space. The protein localises to the apoplast. The enzyme catalyses Hydrolysis of terminal non-reducing beta-D-galactose residues in beta-D-galactosides.. Its function is as follows. Involved in cell wall degradation. Degrades polysaccharides containing beta-(1--&gt;4)-linked galactans, acting as an exo-(1--&gt;4)-beta-D-galactanase. The chain is Beta-galactosidase from Malus domestica (Apple).